A 2059-amino-acid polypeptide reads, in one-letter code: Non-reducing polyketide synthase stmB (2059 aa).

The Starter acyltransferase (SAT) domain occupies 7-243 (LLFGDQTVEL…LKLAAYGAVH (237 aa)). One can recognise a Ketosynthase family 3 (KS3) domain in the interval 366–796 (SNSIAIVGMA…GGNSCLILEE (431 aa)). Catalysis depends on for beta-ketoacyl synthase activity residues cysteine 538, histidine 673, and histidine 713. The Malonyl-CoA:ACP transacylase (MAT) domain maps to 895 to 1185 (WVFSGQGSQY…CGSMVKATLG (291 aa)). The tract at residues 1273 to 1413 (LHFVKKETVT…SASEWTDEWS (141 aa)) is N-terminal hotdog fold. In terms of domain architecture, PKS/mFAS DH spans 1273–1581 (LHFVKKETVT…FQRMPRMVLH (309 aa)). The Proton acceptor; for dehydratase activity role is filled by histidine 1306. The tract at residues 1435–1581 (GDHLRRPVVY…FQRMPRMVLH (147 aa)) is C-terminal hotdog fold. Residue aspartate 1495 is the Proton donor; for dehydratase activity of the active site. One can recognise a Carrier domain in the interval 1619 to 1696 (PPKHDLADQL…DARRALGGDE (78 aa)). Serine 1656 carries the post-translational modification O-(pantetheine 4'-phosphoryl)serine. A disordered region spans residues 1693–1727 (GGDETASESENDAEGDAPSDGGSPSGSWTPISPPE). Residues 1697-1709 (TASESENDAEGDA) are compositionally biased toward acidic residues. The segment covering 1710–1719 (PSDGGSPSGS) has biased composition (low complexity). Residues 1778-2059 (AVEYKSNVVL…LGKLLQEAVA (282 aa)) are thioesterase (TE) domain.

It depends on pantetheine 4'-phosphate as a cofactor.

It participates in mycotoxin biosynthesis. In terms of biological role, non-reducing polyketide synthase; part of the gene cluster that mediates the biosynthesis of stromemycin, a depside C-glucoside with two unsaturated C9 side chains belonging to aromatic polyketide glycosides. The HR-PKS stmA and the NR-PKS stmB act as scaffold-generating enzymes responsible for the biosynthesis of the polyketide skeleton bininalkenylresorcylic acid. StmA condenses on acetyl-CoA starter unit with 4 malonyl-CoA units and the stmB uses 3 more malonyl-CoA units and catalyzes the depside bond formation. The glycoytransferase stmC then acts as the tailoring enzyme responsible for 3-C-glucosylation of bininalkenylresorcylic acid to yield stromemycin. This is Non-reducing polyketide synthase stmB from Aspergillus ustus.